The sequence spans 599 residues: Adenine deaminase (599 aa).

It belongs to the metallo-dependent hydrolases superfamily. Adenine deaminase family. Mn(2+) serves as cofactor.

The catalysed reaction is adenine + H2O + H(+) = hypoxanthine + NH4(+). In Clostridium botulinum (strain Langeland / NCTC 10281 / Type F), this protein is Adenine deaminase.